Consider the following 881-residue polypeptide: MKLTPMMQQYLEVKEKCKDCILFFRLGDFYEMFFEDAETASKELELVLTGRDCGLSKRAPMCGIPYHSASNYINRLVSKGYKIAICEQLEDPSAAKGIVKRDIVKIVTPGTYSDSNFLNETKNNYIMSLYIEDKSVAMCFCDISTGDFFATSHSLDKSIILDEISKFDPSELLLNKDIDKNILKEIKNRFTISITNLEKDYFKDYNLLEGQFSDFSKEEYSLVLIKCGNGLLKYILETQKMSLGHIDCFKNYNIVDYLSMDINSRRNLEITETIRDKSRKGSLLWVLDKCSTAMGARLIRNWVEQPLINKEKIDKRLNAVEELVLNISLHEDLKDALKDIYDIQRIVGKISSKNVNAKELLSLKNSIEKLPYIKDILSKLEADLFKDMLSNLDELKDIYELLESSIMDNPPITIKDGNLIKNGFNKEIDELRMAKSHGKEWIANLESSEREFTGIKSLKVGYNKVFGYFIEVTKSNISSVPEGRYVRKQTLSNCERYITPELKEMEDKILGAEEKLISLEYEVFVSIRNSIEKDIDRMKISANIVAILDCLSSLSTVALENNYSKPKILEGNDIIIKDGRHPVVEKMIPTGSFVANDTTMDTEDNQMLLITGPNMAGKSTYMRQVALITIMAQIGSFVPAKEASISLCDKIFTRIGASDDLSAGKSTFMVEMWEVSNILKNATSKSLIILDEVGRGTSTFDGLSIAWAVIEYICNNKNLRSKTLFATHYHELIQLENKIKGVKNYSVSVKEMDKDIVFLRKIIEGGADQSYGIEVAKLAGLPEDVIIRAKEILNSIEQNKDNKIELDDIKENKNHIEKENKKEIATDKLLANDDFQISFTQIEEENLIKEISSIDILNLNPMEGFNKLYDLINKAKSIEKK.

612–619 (GPNMAGKS) is a binding site for ATP.

It belongs to the DNA mismatch repair MutS family.

Its function is as follows. This protein is involved in the repair of mismatches in DNA. It is possible that it carries out the mismatch recognition step. This protein has a weak ATPase activity. This is DNA mismatch repair protein MutS from Clostridium tetani (strain Massachusetts / E88).